A 141-amino-acid polypeptide reads, in one-letter code: Nucleoside diphosphate kinase (141 aa).

6 residues coordinate ATP: Lys11, Phe59, Arg87, Thr93, Arg104, and Asn114. His117 functions as the Pros-phosphohistidine intermediate in the catalytic mechanism.

Belongs to the NDK family. Homotetramer. The cofactor is Mg(2+).

Its subcellular location is the cytoplasm. It catalyses the reaction a 2'-deoxyribonucleoside 5'-diphosphate + ATP = a 2'-deoxyribonucleoside 5'-triphosphate + ADP. The catalysed reaction is a ribonucleoside 5'-diphosphate + ATP = a ribonucleoside 5'-triphosphate + ADP. In terms of biological role, major role in the synthesis of nucleoside triphosphates other than ATP. The ATP gamma phosphate is transferred to the NDP beta phosphate via a ping-pong mechanism, using a phosphorylated active-site intermediate. The polypeptide is Nucleoside diphosphate kinase (Proteus mirabilis (strain HI4320)).